The sequence spans 115 residues: Cell division topological specificity factor (115 aa).

Residues 89–115 (TGQIQLKEPKNQSEVDSPETEGKDQNS) are disordered.

Belongs to the MinE family.

Functionally, prevents the cell division inhibition by proteins MinC and MinD at internal division sites while permitting inhibition at polar sites. This ensures cell division at the proper site by restricting the formation of a division septum at the midpoint of the long axis of the cell. This is Cell division topological specificity factor from Prochlorococcus marinus (strain NATL2A).